A 197-amino-acid chain; its full sequence is MSSTAGTRRPRQITPTSPSPSPEPQPGATNGSSSTINVAVPSASAPAQVAPSQVAAAAATPVDAAEAVRINLETRVRSVVDLLYQLAVCSADVQEGSQHLVANKVNECIQALAALDATKDELHRAHMMIPQDVLEMLDTGKNPDIHTRNFVNRLASENQYSYGQHRAVERYKATLDAALDQAFPELKAAQAESTETK.

Residues 1–39 (MSSTAGTRRPRQITPTSPSPSPEPQPGATNGSSSTINVA) form a disordered region. A compositionally biased stretch (polar residues) spans 27–37 (GATNGSSSTIN).

The protein belongs to the Mediator complex subunit 10 family. In terms of assembly, component of the Mediator complex.

The protein resides in the nucleus. Functionally, component of the Mediator complex, a coactivator involved in the regulated transcription of nearly all RNA polymerase II-dependent genes. Mediator functions as a bridge to convey information from gene-specific regulatory proteins to the basal RNA polymerase II transcription machinery. Mediator is recruited to promoters by direct interactions with regulatory proteins and serves as a scaffold for the assembly of a functional preinitiation complex with RNA polymerase II and the general transcription factors. The protein is Mediator of RNA polymerase II transcription subunit 10 (NUT2) of Mycosarcoma maydis (Corn smut fungus).